The primary structure comprises 118 residues: Large ribosomal subunit protein bL20 (118 aa).

The protein belongs to the bacterial ribosomal protein bL20 family.

Binds directly to 23S ribosomal RNA and is necessary for the in vitro assembly process of the 50S ribosomal subunit. It is not involved in the protein synthesizing functions of that subunit. The chain is Large ribosomal subunit protein bL20 from Thermotoga neapolitana (strain ATCC 49049 / DSM 4359 / NBRC 107923 / NS-E).